The sequence spans 613 residues: Probable hydrolase clz13 (613 aa).

The N-terminal stretch at 1–25 (MCLLSMRFTVAILLVLLSHCGGSHA) is a signal peptide. N-linked (GlcNAc...) asparagine glycans are attached at residues N61, N89, N286, N422, N456, N477, and N581.

The protein belongs to the beta-lactamase family.

Its pathway is secondary metabolite biosynthesis. Its function is as follows. Probable hydrolase; part of the gene cluster that mediates the biosynthesis of squalestatin S1 (SQS1, also known as zaragozic acid A), a heavily oxidized fungal polyketide that offers potent cholesterol lowering activity by targeting squalene synthase (SS). SQS1 is composed of a 2,8-dioxobicyclic[3.2.1]octane-3,4,5-tricarboxyclic acid core that is connected to two lipophilic polyketide arms. These initial steps feature the priming of an unusual benzoic acid starter unit onto the highly reducing polyketide synthase clz14, followed by oxaloacetate extension and product release to generate a tricarboxylic acid containing product. The phenylalanine ammonia lyase (PAL) clz10 and the acyl-CoA ligase clz12 are involved in transforming phenylalanine into benzoyl-CoA. The citrate synthase-like protein clz17 is involved in connecting the C-alpha-carbons of the hexaketide chain and oxaloacetate to afford the tricarboxylic acid unit. The potential hydrolytic enzymes, clz11 and clz13, are in close proximity to pks2 and may participate in product release. On the other side, the tetraketide arm is synthesized by a the squalestatin tetraketide synthase clz2 and enzymatically esterified to the core in the last biosynthetic step, by the acetyltransferase clz6. The biosynthesis of the tetraketide must involve 3 rounds of chain extension. After the first and second rounds methyl-transfer occurs, and in all rounds of extension the ketoreductase and dehydratase are active. The enoyl reductase and C-MeT of clz2 are not active in the final round of extension. The acetyltransferase clz6 appears to have a broad substrate selectivity for its acyl CoA substrate, allowing the in vitro synthesis of novel squalestatins. The biosynthesis of SQS1 requires several oxidative steps likely performed by oxidoreductases clz3, clz15 and clz16. Finally, in support of the identification of the cluster as being responsible for SQS1 production, the cluster contains a gene encoding a putative squalene synthase (SS) clz20, suggesting a likely mechanism for self-resistance. In Cochliobolus lunatus (Filamentous fungus), this protein is Probable hydrolase clz13.